Here is a 62-residue protein sequence, read N- to C-terminus: Large ribosomal subunit protein bL35 (62 aa).

The disordered stretch occupies residues 25–62 (EQAYRSHLSQNKTTKQKRQARKSVQMHSSDVKRFKALI). Positions 53 to 62 (SDVKRFKALI) are enriched in basic and acidic residues.

This sequence belongs to the bacterial ribosomal protein bL35 family.

In Mycoplasmopsis fermentans (Mycoplasma fermentans), this protein is Large ribosomal subunit protein bL35.